The chain runs to 653 residues: E3 ubiquitin-protein ligase TRIM32 (653 aa).

Ala-2 is modified (N-acetylalanine). The RING-type zinc-finger motif lies at 20-65; the sequence is CPICMESFTEEQLRPKLLHCGHTICRQCLEKLLASSINGVRCPFCS. Ser-55 carries the post-translational modification Phosphoserine; by CHEK2. Zn(2+) contacts are provided by Cys-100, Cys-103, Cys-123, and His-128. A B box-type zinc finger spans residues 103–133; the sequence is CGRRLPRQFCRSCGLVLCEPCREADHQPPGH. A coiled-coil region spans residues 138–197; it reads VKEAAEERRRDFGEKLTRLRELMGELQRRKAALEGVSKDLQARYKAVLQEYGHEERRVQD. A phosphoserine mark is found at Ser-328, Ser-335, and Ser-339. NHL repeat units lie at residues 358-401, 415-458, 459-499, 562-605, and 606-646; these read LKKM…FTRK, DSFV…YTLD, GHCV…FTVD, GRQI…FPKG, and GGYS…YSYH.

This sequence belongs to the TRIM/RBCC family. As to quaternary structure, it self-associates. Interacts with DTNBP1. Interacts with PIAS4/PIASY upon treatment with UVB and TNF-alpha. Interacts with AMBRA1; promoting activation of ULK1 through unanchored 'Lys-63'-linked polyubiquitin chains. Interacts with TICAM1 and TAX1BP1; these interactions target TICAM1 to TAX1BP1-mediated selective autophagic degradation. (Microbial infection) Interacts with S.typhimurium protein SseK3; SseK3 does not glycosylate TRIM32. In terms of processing, ubiquitinated. Phosphorylation at Ser-55 by CHEK2 under oxidative stress, activates the E3 ligase activity and promotes ATG7 ubiquitination leading to positive regulation of the autophagosme assembly. Spleen, thymus, prostate, testis, ovary, intestine, colon and skeletal muscle.

It is found in the cytoplasm. The protein localises to the mitochondrion. Its subcellular location is the endoplasmic reticulum. It carries out the reaction S-ubiquitinyl-[E2 ubiquitin-conjugating enzyme]-L-cysteine + [acceptor protein]-L-lysine = [E2 ubiquitin-conjugating enzyme]-L-cysteine + N(6)-ubiquitinyl-[acceptor protein]-L-lysine.. The protein operates within protein modification; protein ubiquitination. Functionally, E3 ubiquitin ligase that plays a role in various biological processes including neural stem cell differentiation, innate immunity, inflammatory resonse and autophagy. Plays a role in virus-triggered induction of IFN-beta and TNF-alpha by mediating the ubiquitination of STING1. Mechanistically, targets STING1 for 'Lys-63'-linked ubiquitination which promotes the interaction of STING1 with TBK1. Regulates bacterial clearance and promotes autophagy in Mycobacterium tuberculosis-infected macrophages. Negatively regulates TLR3/4-mediated innate immune and inflammatory response by triggering the autophagic degradation of TICAM1 in an E3 activity-independent manner. Plays an essential role in oxidative stress induced cell death by inducing loss of transmembrane potential and enhancing mitochondrial reactive oxygen species (ROS) production during oxidative stress conditions. Ubiquitinates XIAP and targets it for proteasomal degradation. Ubiquitinates DTNBP1 (dysbindin) and promotes its degradation. May ubiquitinate BBS2. Ubiquitinates PIAS4/PIASY and promotes its degradation in keratinocytes treated with UVB and TNF-alpha. Also acts as a regulator of autophagy by mediating formation of unanchored 'Lys-63'-linked polyubiquitin chains that activate ULK1: interaction with AMBRA1 is required for ULK1 activation. Positively regulates dendritic branching by promoting ubiquitination and subsequent degradation of the epigenetic factor CDYL. Under metabolic stress and phosphorylation by CHK2, mediates 'Lys-63'-linked ubiquitination of ATG7 at 'Lys-45' to initiate autophagy. Its function is as follows. (Microbial infection) May play a significant role in mediating the biological activity of the HIV-1 Tat protein in vivo. Binds specifically to the activation domain of HIV-1 Tat and can also interact with the HIV-2 and EIAV Tat proteins in vivo. This is E3 ubiquitin-protein ligase TRIM32 from Homo sapiens (Human).